We begin with the raw amino-acid sequence, 488 residues long: Serine/threonine-protein kinase 32C (488 aa).

The interval M1 to R56 is disordered. Residues S10, S17, and S18 each carry the phosphoserine modification. The segment covering A24–P33 has biased composition (low complexity). One can recognise a Protein kinase domain in the interval F94 to L354. Residues I100–V108 and K123 contribute to the ATP site. The Proton acceptor role is filled by D217. Basic residues predominate over residues H397 to N406. Disordered regions lie at residues H397–N420 and K443–S488.

Belongs to the protein kinase superfamily. Ser/Thr protein kinase family. It depends on Mg(2+) as a cofactor.

It catalyses the reaction L-seryl-[protein] + ATP = O-phospho-L-seryl-[protein] + ADP + H(+). It carries out the reaction L-threonyl-[protein] + ATP = O-phospho-L-threonyl-[protein] + ADP + H(+). The chain is Serine/threonine-protein kinase 32C from Mus musculus (Mouse).